The sequence spans 339 residues: Ketol-acid reductoisomerase (NADP(+)) (339 aa).

The 182-residue stretch at 1–182 folds into the KARI N-terminal Rossmann domain; it reads MRVYYDRDAD…GGGRSGVIET (182 aa). Residues 24–27, Arg48, Ser51, Thr53, and 83–86 each bind NADP(+); these read YGSQ and DEHQ. The active site involves His108. Gly134 contacts NADP(+). In terms of domain architecture, KARI C-terminal knotted spans 183–328; that stretch reads TFKEECETDL…AELRAMMPWI (146 aa). Positions 191, 195, 227, and 231 each coordinate Mg(2+). Substrate is bound at residue Ser252.

This sequence belongs to the ketol-acid reductoisomerase family. Mg(2+) is required as a cofactor.

It carries out the reaction (2R)-2,3-dihydroxy-3-methylbutanoate + NADP(+) = (2S)-2-acetolactate + NADPH + H(+). The enzyme catalyses (2R,3R)-2,3-dihydroxy-3-methylpentanoate + NADP(+) = (S)-2-ethyl-2-hydroxy-3-oxobutanoate + NADPH + H(+). It functions in the pathway amino-acid biosynthesis; L-isoleucine biosynthesis; L-isoleucine from 2-oxobutanoate: step 2/4. The protein operates within amino-acid biosynthesis; L-valine biosynthesis; L-valine from pyruvate: step 2/4. Involved in the biosynthesis of branched-chain amino acids (BCAA). Catalyzes an alkyl-migration followed by a ketol-acid reduction of (S)-2-acetolactate (S2AL) to yield (R)-2,3-dihydroxy-isovalerate. In the isomerase reaction, S2AL is rearranged via a Mg-dependent methyl migration to produce 3-hydroxy-3-methyl-2-ketobutyrate (HMKB). In the reductase reaction, this 2-ketoacid undergoes a metal-dependent reduction by NADPH to yield (R)-2,3-dihydroxy-isovalerate. This Rhizorhabdus wittichii (strain DSM 6014 / CCUG 31198 / JCM 15750 / NBRC 105917 / EY 4224 / RW1) (Sphingomonas wittichii) protein is Ketol-acid reductoisomerase (NADP(+)).